Reading from the N-terminus, the 78-residue chain is Small integral membrane protein 1 (78 aa).

Met-1 carries the N-acetylmethionine modification. Residues 1–22 (MQSQESGVHYSRWDSSSRDEVS) are disordered. Over 1–48 (MQSQESGVHYSRWDSSSRDEVSMTAMSSSEEASCYRRISQKLCSGKLG) the chain is Cytoplasmic. Phosphoserine occurs at positions 6, 17, 22, and 27. Residues 11–21 (SRWDSSSRDEV) are compositionally biased toward basic and acidic residues. A helical; Signal-anchor for type II membrane protein transmembrane segment spans residues 49-69 (IAMKVLGGVALFWIIFILGYI). The Extracellular segment spans residues 70 to 78 (TGYYVHKCK).

The protein belongs to the SMIM1 family. As to quaternary structure, homooligomer; disulfide-linked.

Its subcellular location is the cell membrane. Its function is as follows. Regulator of red blood cell formation. The polypeptide is Small integral membrane protein 1 (Mus musculus (Mouse)).